The sequence spans 544 residues: Chaperonin GroEL (544 aa).

ATP is bound by residues 29–32, 86–90, G413, 477–479, and D493; these read TLGP, DGTTT, and DVL.

This sequence belongs to the chaperonin (HSP60) family. Forms a cylinder of 14 subunits composed of two heptameric rings stacked back-to-back. Interacts with the co-chaperonin GroES.

Its subcellular location is the cytoplasm. The enzyme catalyses ATP + H2O + a folded polypeptide = ADP + phosphate + an unfolded polypeptide.. Functionally, together with its co-chaperonin GroES, plays an essential role in assisting protein folding. The GroEL-GroES system forms a nano-cage that allows encapsulation of the non-native substrate proteins and provides a physical environment optimized to promote and accelerate protein folding. In Clostridium kluyveri (strain NBRC 12016), this protein is Chaperonin GroEL.